Reading from the N-terminus, the 65-residue chain is Non-structural protein 5a (65 aa).

This chain is Non-structural protein 5a, found in Avian infectious bronchitis virus (strain Beaudette) (IBV).